A 901-amino-acid polypeptide reads, in one-letter code: Protein translocase subunit SecA (901 aa).

ATP contacts are provided by residues Q87, 105-109 (GEGKT), and D512. The Zn(2+) site is built by C885, C887, C896, and H897.

This sequence belongs to the SecA family. In terms of assembly, monomer and homodimer. Part of the essential Sec protein translocation apparatus which comprises SecA, SecYEG and auxiliary proteins SecDF-YajC and YidC. The cofactor is Zn(2+).

It is found in the cell inner membrane. The protein localises to the cytoplasm. It catalyses the reaction ATP + H2O + cellular proteinSide 1 = ADP + phosphate + cellular proteinSide 2.. Its function is as follows. Part of the Sec protein translocase complex. Interacts with the SecYEG preprotein conducting channel. Has a central role in coupling the hydrolysis of ATP to the transfer of proteins into and across the cell membrane, serving both as a receptor for the preprotein-SecB complex and as an ATP-driven molecular motor driving the stepwise translocation of polypeptide chains across the membrane. The polypeptide is Protein translocase subunit SecA (Salmonella enteritidis PT4 (strain P125109)).